Reading from the N-terminus, the 165-residue chain is Phosphopantetheine adenylyltransferase (165 aa).

S10 is a binding site for substrate. ATP contacts are provided by residues 10–11 and H18; that span reads SF. 3 residues coordinate substrate: K42, L74, and R88. ATP contacts are provided by residues 89–91, E99, and 124–130; these read GLR and WFYTSST.

It belongs to the bacterial CoaD family. Homohexamer. Requires Mg(2+) as cofactor.

Its subcellular location is the cytoplasm. It catalyses the reaction (R)-4'-phosphopantetheine + ATP + H(+) = 3'-dephospho-CoA + diphosphate. It participates in cofactor biosynthesis; coenzyme A biosynthesis; CoA from (R)-pantothenate: step 4/5. Functionally, reversibly transfers an adenylyl group from ATP to 4'-phosphopantetheine, yielding dephospho-CoA (dPCoA) and pyrophosphate. The chain is Phosphopantetheine adenylyltransferase from Syntrophus aciditrophicus (strain SB).